Reading from the N-terminus, the 452-residue chain is GTPase Obg (452 aa).

Residues 1 to 158 (MFIDRAKIYV…KWIVLELKVM (158 aa)) enclose the Obg domain. Disordered stretches follow at residues 66–87 (GKRG…DKVI) and 117–143 (AEGG…SEDG). The OBG-type G domain occupies 159 to 338 (AEVGLIGYPN…LLDFVAEKVA (180 aa)). Residues 165-172 (GYPNVGKS), 190-194 (FTTLN), 212-215 (DIPG), 282-285 (NKMD), and 319-321 (SAA) each bind GTP. Mg(2+) is bound by residues Ser172 and Thr192. Residues 376-452 (IEEKPKSDFG…KIGNVEFEYQ (77 aa)) form the OCT domain.

It belongs to the TRAFAC class OBG-HflX-like GTPase superfamily. OBG GTPase family. As to quaternary structure, monomer. It depends on Mg(2+) as a cofactor.

Its subcellular location is the cytoplasm. Functionally, an essential GTPase which binds GTP, GDP and possibly (p)ppGpp with moderate affinity, with high nucleotide exchange rates and a fairly low GTP hydrolysis rate. Plays a role in control of the cell cycle, stress response, ribosome biogenesis and in those bacteria that undergo differentiation, in morphogenesis control. This chain is GTPase Obg, found in Natranaerobius thermophilus (strain ATCC BAA-1301 / DSM 18059 / JW/NM-WN-LF).